The following is a 695-amino-acid chain: Elongation factor G 2 (695 aa).

The tr-type G domain maps to 5 to 280 (SKYRNIGIFA…AVVDYLPSPT (276 aa)). GTP contacts are provided by residues 14–21 (AHVDAGKT), 78–82 (DTPGH), and 132–135 (NKLD).

This sequence belongs to the TRAFAC class translation factor GTPase superfamily. Classic translation factor GTPase family. EF-G/EF-2 subfamily.

The protein resides in the cytoplasm. In terms of biological role, catalyzes the GTP-dependent ribosomal translocation step during translation elongation. During this step, the ribosome changes from the pre-translocational (PRE) to the post-translocational (POST) state as the newly formed A-site-bound peptidyl-tRNA and P-site-bound deacylated tRNA move to the P and E sites, respectively. Catalyzes the coordinated movement of the two tRNA molecules, the mRNA and conformational changes in the ribosome. This Vibrio vulnificus (strain YJ016) protein is Elongation factor G 2.